Reading from the N-terminus, the 269-residue chain is Small ribosomal subunit protein uS2 (269 aa).

It belongs to the universal ribosomal protein uS2 family.

This Synechocystis sp. (strain ATCC 27184 / PCC 6803 / Kazusa) protein is Small ribosomal subunit protein uS2 (rpsB).